The primary structure comprises 183 residues: Threonylcarbamoyl-AMP synthase (183 aa).

Positions 1–183 (MNREQIAEAL…LRTNQLFRQG (183 aa)) constitute a YrdC-like domain.

Belongs to the SUA5 family. TsaC subfamily.

It is found in the cytoplasm. The enzyme catalyses L-threonine + hydrogencarbonate + ATP = L-threonylcarbamoyladenylate + diphosphate + H2O. Functionally, required for the formation of a threonylcarbamoyl group on adenosine at position 37 (t(6)A37) in tRNAs that read codons beginning with adenine. Catalyzes the conversion of L-threonine, HCO(3)(-)/CO(2) and ATP to give threonylcarbamoyl-AMP (TC-AMP) as the acyladenylate intermediate, with the release of diphosphate. The chain is Threonylcarbamoyl-AMP synthase from Haemophilus influenzae (strain 86-028NP).